The following is a 323-amino-acid chain: MIRSVVRGIGSALPKRVMKNTDFEGIIETSDEWIVQRTGIRERHIAGEGETTVSLGAAAARAAIENAGLQPSDIDLVLLATSTPNNTFPASAVAIQRELGITRGFAFDLQAVCSGFIYAITTADLYIRGGMARRVLVIGAETFSRILDWTDRTTCVLFGDGAGAIVLEAAEGHGLTSDRGILAANLRSDGNHKEKLYVDGGPSTTQTVGHLRMEGREVFKHAVGMITDVIEASFEATGLTAEDIDWFVPHQANKRIIDASAKKLHIAEEKVVITVDRHGNTSAASVPLALATAVADGRIKKGDLVLLEAMGGGFTWGAVLVRW.

Residues Cys113 and His250 contribute to the active site. Residues Gln251–Arg255 are ACP-binding. Asn280 is an active-site residue.

Belongs to the thiolase-like superfamily. FabH family. As to quaternary structure, homodimer.

It is found in the cytoplasm. The catalysed reaction is malonyl-[ACP] + acetyl-CoA + H(+) = 3-oxobutanoyl-[ACP] + CO2 + CoA. The protein operates within lipid metabolism; fatty acid biosynthesis. Functionally, catalyzes the condensation reaction of fatty acid synthesis by the addition to an acyl acceptor of two carbons from malonyl-ACP. Catalyzes the first condensation reaction which initiates fatty acid synthesis and may therefore play a role in governing the total rate of fatty acid production. Possesses both acetoacetyl-ACP synthase and acetyl transacylase activities. Its substrate specificity determines the biosynthesis of branched-chain and/or straight-chain of fatty acids. The polypeptide is Beta-ketoacyl-[acyl-carrier-protein] synthase III (Brucella melitensis biotype 2 (strain ATCC 23457)).